A 103-amino-acid chain; its full sequence is MYAVIKTGGKQYRVENGLKLKIEQVPVEIGSELLIDQVLMVADGDNISLGKPLVSGASVKATVLEQGRHDKVRIFKMRRRKHYRKQQGHRQNYTEIQITGISV.

This sequence belongs to the bacterial ribosomal protein bL21 family. In terms of assembly, part of the 50S ribosomal subunit. Contacts protein L20.

In terms of biological role, this protein binds to 23S rRNA in the presence of protein L20. This is Large ribosomal subunit protein bL21 from Nitrosospira multiformis (strain ATCC 25196 / NCIMB 11849 / C 71).